Reading from the N-terminus, the 288-residue chain is MTDNTDNDKLYRYLFQDRAVRGEWVRLNQTFTDTLNTHQYPKVIQNLLGEMMVATSLLTATLKFEGDITVQVQGDGPLKLALVNGNHQQQIRALARLQADVSDDMSLAQLVGKGVLVITIAPTEGERYQGVIALDKPTITACLEDYFVRSEQLQTQLIIRAGEFEGQPVAAGMLLQIMPDGSGSPEDFEHLATLAATVKEEELFGLTAEELLYRLYHEERVEIFPSQPISFFCGCSQERSGAALLLISDEELDEVLAEHNGTIDMQCECCGTHYFFNKAAIMQLKVEK.

2 disulfide bridges follow: Cys-233–Cys-235 and Cys-267–Cys-270.

This sequence belongs to the HSP33 family. Under oxidizing conditions two disulfide bonds are formed involving the reactive cysteines. Under reducing conditions zinc is bound to the reactive cysteines and the protein is inactive.

The protein resides in the cytoplasm. Functionally, redox regulated molecular chaperone. Protects both thermally unfolding and oxidatively damaged proteins from irreversible aggregation. Plays an important role in the bacterial defense system toward oxidative stress. The protein is 33 kDa chaperonin of Pasteurella multocida (strain Pm70).